The sequence spans 901 residues: Cyanophycin synthetase (901 aa).

The ATP-grasp domain maps to 224–478; the sequence is KRILAASGVP…VAGAVMDMLF (255 aa). 493 to 499 provides a ligand contact to ATP; that stretch reads GTNGKTT.

It in the C-terminal section; belongs to the MurCDEF family. In terms of assembly, homodimer.

The catalysed reaction is [L-4-(L-arginin-2-N-yl)aspartate](n) + L-aspartate + ATP = [L-4-(L-arginin-2-N-yl)aspartate](n)-L-aspartate + ADP + phosphate + H(+). The enzyme catalyses [L-4-(L-arginin-2-N-yl)aspartate](n)-L-aspartate + L-arginine + ATP = [L-4-(L-arginin-2-N-yl)aspartate](n+1) + ADP + phosphate + H(+). Catalyzes the ATP-dependent polymerization of arginine and aspartate to multi-L-arginyl-poly-L-aspartic acid (cyanophycin; a water-insoluble reserve polymer). This chain is Cyanophycin synthetase (cphA), found in Trichormus variabilis (strain ATCC 29413 / PCC 7937) (Anabaena variabilis).